The sequence spans 236 residues: Probable methylthioribulose-1-phosphate dehydratase (236 aa).

The tract at residues 1–29 (MQNVQQPKKRKLSDEIIAEDEDYQRDPEH) is disordered. Substrate is bound at residue Cys103. Positions 121, 123, and 201 each coordinate Zn(2+).

This sequence belongs to the aldolase class II family. MtnB subfamily. It depends on Zn(2+) as a cofactor.

It is found in the cytoplasm. The enzyme catalyses 5-(methylsulfanyl)-D-ribulose 1-phosphate = 5-methylsulfanyl-2,3-dioxopentyl phosphate + H2O. It participates in amino-acid biosynthesis; L-methionine biosynthesis via salvage pathway; L-methionine from S-methyl-5-thio-alpha-D-ribose 1-phosphate: step 2/6. In terms of biological role, catalyzes the dehydration of methylthioribulose-1-phosphate (MTRu-1-P) into 2,3-diketo-5-methylthiopentyl-1-phosphate (DK-MTP-1-P). In Trichoplax adhaerens (Trichoplax reptans), this protein is Probable methylthioribulose-1-phosphate dehydratase.